We begin with the raw amino-acid sequence, 603 residues long: NADH-ubiquinone oxidoreductase chain 5 (603 aa).

15 consecutive transmembrane segments (helical) span residues 38-58, 87-107, 122-142, 144-160, 171-191, 211-233, 241-261, 272-292, 301-320, 325-347, 370-390, 407-429, 458-478, 482-502, and 582-602; these read SIVA…MCLD, MMFI…SLWY, LIFL…QLFI, WEGV…WWYA, AILY…WFIL, TPLL…HPWL, TPVS…FLLI, LIQT…AVCA, IVAF…IGIN, AFLH…GSII, STSL…TGFY, WALS…MILL, AAGS…ASPF, IPLY…LTAL, and GMIK…LLLI.

It belongs to the complex I subunit 5 family. Core subunit of respiratory chain NADH dehydrogenase (Complex I) which is composed of 45 different subunits.

The protein localises to the mitochondrion inner membrane. The catalysed reaction is a ubiquinone + NADH + 5 H(+)(in) = a ubiquinol + NAD(+) + 4 H(+)(out). Its function is as follows. Core subunit of the mitochondrial membrane respiratory chain NADH dehydrogenase (Complex I) which catalyzes electron transfer from NADH through the respiratory chain, using ubiquinone as an electron acceptor. Essential for the catalytic activity and assembly of complex I. The chain is NADH-ubiquinone oxidoreductase chain 5 (MT-ND5) from Homo sapiens (Human).